Reading from the N-terminus, the 213-residue chain is BREX protein BrxA (213 aa).

This sequence belongs to the BrxA family.

In terms of biological role, BREX systems (bacteriophage exclusion) provide immunity against bacteriophage. A probably non-essential part of a type 1 BREX system which protects against dsDNA phage. This system allows phage adsorption but prevents phage DNA replication, without degradation of the phage DNA. Methylation of bacterial DNA by PglX guides self/non-self discrimination. When the brxA-brxB-brxC-pglX-pglZ-brxL genes are transformed into a susceptible E.coli strain (BW25113) they confer very high resistance to infection by bacteriophage VR7 and VpaE1, about 100-fold protection against lambda, T5 and T7 and no protection against RNA phage Qbeta, ssDNA phage M13 or dSDNA phage T4 and VR5. Glycosylated phage DNA is not susceptible to BREX. The BREX system does not confer resistance to lysogenic lambda phage, i.e. prophage that are integrated into the chromosomal DNA and then induced to form phage. The protein is BREX protein BrxA of Escherichia coli O9:H4 (strain HS).